The primary structure comprises 230 residues: Bidirectional sugar transporter SWEET16 (230 aa).

Over 1-3 (MAD) the chain is Extracellular. Residues 4 to 24 (LSFYVGVIGNVISVLVFLSPV) traverse the membrane as a helical segment. Positions 6–92 (FYVGVIGNVI…LIFLFFVPKS (87 aa)) constitute a MtN3/slv 1 domain. The Cytoplasmic segment spans residues 25–40 (ETFWRIVQRRSTEEYE). Residues 41–61 (CFPYICTLMSSSLWTYYGIVT) form a helical membrane-spanning segment. Over 62–69 (PGEYLVST) the chain is Extracellular. Residues 70-90 (VNGFGALAESIYVLIFLFFVP) form a helical membrane-spanning segment. The Cytoplasmic segment spans residues 91 to 93 (KSR). The helical transmembrane segment at 94–114 (FLKTVVVVLALNVCFPVIAIA) threads the bilayer. At 115–128 (GTRTLFGDANSRSS) the chain is on the extracellular side. The chain crosses the membrane as a helical span at residues 129 to 149 (SMGFICATLNIIMYGSPLSAI). The MtN3/slv 2 domain maps to 129-212 (SMGFICATLN…LLIYAYYRNA (84 aa)). At 150–162 (KTVVTTRSVQFMP) the chain is on the cytoplasmic side. Residues 163–183 (FWLSFFLFLNGAIWGVYALLL) traverse the membrane as a helical segment. At 184-185 (HD) the chain is on the extracellular side. The helical transmembrane segment at 186-206 (MFLLVPNGMGFFLGIMQLLIY) threads the bilayer. Topologically, residues 207–230 (AYYRNAEPIVEDEEGLIPNQPLLA) are cytoplasmic.

It belongs to the SWEET sugar transporter family. In terms of assembly, forms homooligomers and heterooligomers with SWEET1, SWEET7, SWEET8, SWEET9 and SWEET17. Mostly expressed in the cortex of mature roots, and, to a lower extent, in aerial organs such as leaves, stems, and flowers. Mainly present in vascular parenchyma cells, especially in the petiole vasculature, flower stalks and at the base of individual, not fully developed flowers.

It localises to the vacuole membrane. Its function is as follows. Mediates both low-affinity uptake and efflux of sugar across the vacuolar membrane. Regulates sugars homeostasis in leaves and roots by exporting/importing them through the tonoplast regarding metabolic demand. Acts as a vacuolar hexose transporter, such as glucose (Glc), fructose (Fru), and sucrose (Suc). The polypeptide is Bidirectional sugar transporter SWEET16 (Arabidopsis thaliana (Mouse-ear cress)).